Here is a 202-residue protein sequence, read N- to C-terminus: Ribosomal RNA small subunit methyltransferase G (202 aa).

S-adenosyl-L-methionine is bound by residues G75, F80, 125 to 126, and R139; that span reads VQ.

This sequence belongs to the methyltransferase superfamily. RNA methyltransferase RsmG family.

The protein localises to the cytoplasm. Functionally, specifically methylates the N7 position of a guanine in 16S rRNA. This is Ribosomal RNA small subunit methyltransferase G from Mesomycoplasma hyopneumoniae (strain 232) (Mycoplasma hyopneumoniae).